The sequence spans 56 residues: Cecropin-A2 (56 aa).

The residue at position 55 (arginine 55) is an Arginine amide.

It belongs to the cecropin family.

It localises to the secreted. Functionally, cecropins have lytic and antibacterial activity against several Gram-positive and Gram-negative bacteria. The polypeptide is Cecropin-A2 (CecA2) (Drosophila yakuba (Fruit fly)).